A 393-amino-acid chain; its full sequence is S-adenosylmethionine synthase (393 aa).

Glu9 is a binding site for Mg(2+). His15 contributes to the ATP binding site. Glu43 is a K(+) binding site. Glu56 and Gln99 together coordinate L-methionine. ATP-binding positions include 167–169 (DGK), 235–238 (SGRF), Asp246, 252–253 (RK), Ala269, Lys273, and Lys277. Residue Asp246 participates in L-methionine binding. Lys277 serves as a coordination point for L-methionine.

The protein belongs to the AdoMet synthase family. In terms of assembly, homotetramer. The cofactor is Mn(2+). Mg(2+) is required as a cofactor. Requires Co(2+) as cofactor. K(+) serves as cofactor.

It is found in the cytoplasm. It catalyses the reaction L-methionine + ATP + H2O = S-adenosyl-L-methionine + phosphate + diphosphate. Its pathway is amino-acid biosynthesis; S-adenosyl-L-methionine biosynthesis; S-adenosyl-L-methionine from L-methionine: step 1/1. In terms of biological role, catalyzes the formation of S-adenosylmethionine from methionine and ATP. The reaction comprises two steps that are both catalyzed by the same enzyme: formation of S-adenosylmethionine (AdoMet) and triphosphate, and subsequent hydrolysis of the triphosphate. The protein is S-adenosylmethionine synthase (SAMS) of Gossypium hirsutum (Upland cotton).